The following is a 269-amino-acid chain: Phosphate import ATP-binding protein PstB 2 (269 aa).

One can recognise an ABC transporter domain in the interval 23 to 264 (LHTEDLHVFY…PKIQATEDYV (242 aa)). Position 55 to 62 (55 to 62 (GPSGCGKS)) interacts with ATP.

This sequence belongs to the ABC transporter superfamily. Phosphate importer (TC 3.A.1.7) family. The complex is composed of two ATP-binding proteins (PstB), two transmembrane proteins (PstC and PstA) and a solute-binding protein (PstS).

Its subcellular location is the cell membrane. The catalysed reaction is phosphate(out) + ATP + H2O = ADP + 2 phosphate(in) + H(+). In terms of biological role, part of the ABC transporter complex PstSACB involved in phosphate import. Responsible for energy coupling to the transport system. The protein is Phosphate import ATP-binding protein PstB 2 of Enterococcus faecalis (strain ATCC 700802 / V583).